Here is a 165-residue protein sequence, read N- to C-terminus: Mating factor alpha-1 (165 aa).

A signal peptide (or 20) is located at residues 1-19 (MRFPSIFTAVLFAASSALA). 4 propeptides span residues 20–89 (APVN…EAEA), 105–110 (EAEAEA), 126–131 (EADAEA), and 147–152 (EADAEA).

Functionally, the active factor is excreted into the culture medium by haploid cells of the alpha mating type and acts on cells of the opposite mating type (type A). It mediates the conjugation process between the two types by inhibiting the initiation of DNA synthesis in type a cells and synchronizing them with type alpha. This chain is Mating factor alpha-1 (MF(ALPHA)1), found in Saccharomyces cerevisiae (strain ATCC 204508 / S288c) (Baker's yeast).